We begin with the raw amino-acid sequence, 438 residues long: Serine hydroxymethyltransferase (438 aa).

Residues leucine 133 and 137–139 contribute to the (6S)-5,6,7,8-tetrahydrofolate site; that span reads GHL. Lysine 242 is modified (N6-(pyridoxal phosphate)lysine).

Belongs to the SHMT family. Homodimer. Pyridoxal 5'-phosphate serves as cofactor.

It is found in the cytoplasm. The catalysed reaction is (6R)-5,10-methylene-5,6,7,8-tetrahydrofolate + glycine + H2O = (6S)-5,6,7,8-tetrahydrofolate + L-serine. It functions in the pathway one-carbon metabolism; tetrahydrofolate interconversion. Its pathway is amino-acid biosynthesis; glycine biosynthesis; glycine from L-serine: step 1/1. In terms of biological role, catalyzes the reversible interconversion of serine and glycine with tetrahydrofolate (THF) serving as the one-carbon carrier. This reaction serves as the major source of one-carbon groups required for the biosynthesis of purines, thymidylate, methionine, and other important biomolecules. Also exhibits THF-independent aldolase activity toward beta-hydroxyamino acids, producing glycine and aldehydes, via a retro-aldol mechanism. This is Serine hydroxymethyltransferase from Brucella suis (strain ATCC 23445 / NCTC 10510).